The primary structure comprises 387 residues: MATTKSVLVLIFMILATTSSTFATLGEMVTVLSTDGGGIKGIIPGIIPEFLEGQLQKMDNNADARLADYFDVIGGTSTGGLLTAMITTPNENNRPFAAAKDIVPFYFQHGPHIFNSSTGQFFGPKYDGKYLMQVLQEKLGETRVHQALTEVAISSFDIKTNKPVIFTKSNLAKSPELDAKMYDICYSTAAAPIYFPPHHFVTHTSNGATYEFNLVDGGVATVGDPALLSLSVATRLAQEDPAFSSIKSLDYKQMLLLSLGTGTNSEFDKTYTAEEAAKWGPLRWMLAIQQMTNAASSYMTDYYISTVFQARHSQNNYLRVQENALNGTTTEMDDASEANMELLVQVGETLLKKPVSKDSPETYEEALKRFAKLLSDRKKLRANKASY.

Positions 1–23 (MATTKSVLVLIFMILATTSSTFA) are cleaved as a signal peptide. One can recognise a PNPLA domain in the interval 32 to 230 (LSTDGGGIKG…TVGDPALLSL (199 aa)). The GXGXXG motif lies at 36 to 41 (GGGIKG). A GXSXG motif is present at residues 75-79 (GTSTG). Residue Ser-77 is the Nucleophile of the active site. Asn-115 is a glycosylation site (N-linked (GlcNAc...) asparagine). Residue Asp-216 is the Proton acceptor of the active site. The short motif at 216-218 (DGG) is the DGA/G element. Residues 322–385 (ENALNGTTTE…DRKKLRANKA (64 aa)) adopt a coiled-coil conformation. Asn-326 carries N-linked (GlcNAc...) asparagine glycosylation.

This sequence belongs to the patatin family. Tuber.

The protein localises to the vacuole. In terms of biological role, probable lipolytic acyl hydrolase (LAH), an activity which is thought to be involved in the response of tubers to pathogens. The chain is Patatin-11 from Solanum tuberosum (Potato).